The chain runs to 265 residues: Aquaporin-5 (265 aa).

Residues methionine 1 to lysine 12 are Cytoplasmic-facing. A helical transmembrane segment spans residues alanine 13 to leucine 33. Residues lysine 34–leucine 39 are Extracellular-facing. The chain crosses the membrane as a helical span at residues proline 40–leucine 60. At glycine 61 to glycine 65 the chain is on the cytoplasmic side. The discontinuously helical intramembrane region spans glycine 66 to leucine 74. The short motif at asparagine 69 to alanine 71 is the NPA 1 element. Topologically, residues alanine 75–alanine 87 are cytoplasmic. A helical transmembrane segment spans residues valine 88–leucine 108. Residues alanine 109–threonine 126 lie on the Extracellular side of the membrane. Residue asparagine 124 is glycosylated (N-linked (GlcNAc...) asparagine). The chain crosses the membrane as a helical span at residues threonine 127–phenylalanine 147. Topologically, residues serine 148–valine 158 are cytoplasmic. A helical membrane pass occupies residues glycine 159–phenylalanine 179. A topological domain (extracellular) is located at residue threonine 180. The discontinuously helical intramembrane region spans glycine 181 to glycine 191. Residues asparagine 185–alanine 187 carry the NPA 2 motif. Residues proline 192 to histidine 203 are Extracellular-facing. The chain crosses the membrane as a helical span at residues tryptophan 204 to leucine 224. Topologically, residues leucine 225–histidine 265 are cytoplasmic.

This sequence belongs to the MIP/aquaporin (TC 1.A.8) family. Homotetramer; each monomer provides an independent water pore. Interacts with TRPV4; the interaction is probably indirect and regulates TRPV4 activation by hypotonicity. As to expression, salivary glands, lacrimal glands, corneal epithelium in eye, trachea and lung.

Its subcellular location is the apical cell membrane. It is found in the cell membrane. It localises to the cytoplasmic vesicle membrane. The enzyme catalyses H2O(in) = H2O(out). Aquaporins form homotetrameric transmembrane channels, with each monomer independently mediating water transport across the plasma membrane along its osmotic gradient. Plays an important role in fluid secretion in salivary glands. Required for TRPV4 activation by hypotonicity. Together with TRPV4, controls regulatory volume decrease in salivary epithelial cells. Seems to play a redundant role in water transport in the eye, lung and in sweat glands. This Rattus norvegicus (Rat) protein is Aquaporin-5.